A 1031-amino-acid chain; its full sequence is NACHT, LRR and PYD domains-containing protein 3 (1031 aa).

Positions 1 to 93 constitute a Pyrin domain; that stretch reads MRMVSVRCKL…YEKAKREEPE (93 aa). At serine 5 the chain carries Phosphoserine. Tyrosine 13 bears the Phosphotyrosine mark. Cysteine 125 carries S-palmitoyl cysteine lipidation. The segment at 126 to 129 is required for binding to phosphatidylinositol 4-phosphate (PtdIns4P); it reads RKKK. A phosphotyrosine mark is found at tyrosine 131, tyrosine 135, and tyrosine 138. The region spanning 135–207 is the FISNA domain; that stretch reads YRKYVRSKFQ…SSVNLELLFD (73 aa). Serine 156 is modified (phosphoserine). Residue threonine 164 participates in ATP binding. 2 positions are modified to phosphoserine: serine 195 and serine 198. Positions 217-533 constitute an NACHT domain; sequence HTVVFQGAAG…EFFAAMYYLL (317 aa). ATP is bound at residue 223–230; that stretch reads GAAGIGKT. Serine 262 and serine 292 each carry phosphoserine. A Glycyl lysine isopeptide (Lys-Gly) (interchain with G-Cter in ubiquitin) cross-link involves residue lysine 321. Serine 331 is subject to Phosphoserine. The KFERQ-like motif 1 signature appears at 352-356; it reads LEKLQ. Lysine 427 participates in a covalent cross-link: Glycyl lysine isopeptide (Lys-Gly) (interchain with G-Cter in ubiquitin). Residue histidine 519 participates in ATP binding. The KFERQ-like motif 2 signature appears at 601–605; sequence KIRLE. Lysine 687 is covalently cross-linked (Glycyl lysine isopeptide (Lys-Gly) (interchain with G-Cter in ubiquitin)). Serine 723 and serine 730 each carry phosphoserine. 5 LRR repeats span residues 737–757, 766–787, 794–814, 823–844, and 851–871; these read NLTELNLSGNTLGDPGMNVLC, NIRRLWLGQCCLSHQCCFNISS, KLVELDLSHNALGDFGIRLLC, NLKKLWLVSCCLTSASCEDLAS, and SLTRLYLGENALGDSGVGILC. The KFERQ-like motif 3 signature appears at 793–797; that stretch reads QKLVE. Residue serine 801 is modified to Phosphoserine. S-palmitoyl cysteine attachment occurs at residues cysteine 832, cysteine 833, and cysteine 839. A Phosphotyrosine modification is found at tyrosine 856. A Glycyl lysine isopeptide (Lys-Gly) (interchain with G-Cter in ubiquitin) cross-link involves residue lysine 873. LRR repeat units follow at residues 880–901, 908–929, 937–958, and 965–986; these read NLQKLGLVNSGLTSGCCPALSS, NLTHLYLQGNALGDMGVKLLCE, KLQVLELDNCSLTSHCCWDLST, and SLRKLCLGNNDLGDLGVMLLCE. Cysteine 953 carries the S-palmitoyl cysteine lipid modification. Residue lysine 968 forms a Glycyl lysine isopeptide (Lys-Gly) (interchain with G-Cter in ubiquitin) linkage. The KFERQ-like motif 4 motif lies at 986 to 990; sequence EVLKQ. Serine 1030 carries the post-translational modification Phosphoserine.

This sequence belongs to the NLRP family. Sensor component of NLRP3 inflammasomes; inflammasomes are supramolecular complexes that assemble in the cytosol in response to pathogens and other damage-associated signals and play critical roles in innate immunity and inflammation. The core of NLRP3 inflammasomes consists of a signal sensor component (NLRP3), an adapter (PYCARD/ASC), which recruits an effector pro-inflammatory caspase (CASP1 and, possibly, CASP4 and CASP5). Homodecamer; inactive NLRP3 forms homodecameric double-ring cages that hide pyrin domains within NACHT-LRR rings to avoid premature activation. Interacts (via pyrin domain) with PYCARD/ASC (via pyrin domain); interaction is direct. Interacts (via LRR repeat domain) with NEK7 (via N-terminus); the interaction is required for the formation of the complex NLRP3:PYCARD, oligomerization of PYCARD/ASC and activation of CASP1. Interacts (via LRR repeat domain) with NR4A1/Nur77 (via N-terminus); the interaction is direct, requires activation of NR4A1 by its ligands NBRE-containing dsDNA and lipopolysaccharide, and stimulates the association of NLRP3 with NEK7 for non-canonical NLRP3 inflammasome activation. Interacts with CARD8; leading to inhibit formation of the NLRP3 inflammasome. Interacts with MEFV; this interaction targets NLRP3 to degradation by autophagy, hence preventing excessive IL1B- and IL18-mediated inflammation. Interacts with EIF2AK2/PKR; this interaction requires EIF2AK2 activity, is accompanied by EIF2AK2 autophosphorylation and promotes inflammasome assembly in response to specific stimuli. Interacts with GBP5 (via DAPIN domain); this interaction promotes inflammasome assembly in response to microbial and soluble, but not crystalline, agents. Interacts with PML (isoform PML-1) (via the leucine-rich repeat (LRR) domain); PML-mediated increase in NLRP3 inflammasome activation does not depend upon this interaction. Interacts (via NACHT domain) with DHX33 (via DEAH box); NLRP3 activation in presence of cytosolic dsRNA is mediated by DHX33. Interacts (via NACHT and LRR domains) with ARRB2; this interaction is direct and inducible by polyunsaturated fatty acids (PUFAs). Interacts (via NACHT domain) with DDX3X under both LPS-primed and inflammasome-activating conditions. Interacts with IRF4 (via the LRR domain); this interaction is direct and is required for optimal IRF4 binding to IL4 promoter and efficient IL4 transactivation during differentiation of Th2 helper T-cells. Interacts with MAVS; promoting localization to mitochondria and activation of the NLRP3 inflammasome. Interacts with MARK4; promoting localization of NLRP3 to the microtubule organizing center (MTOC). Interacts with TRIM50; this interaction also promotes NLRP3 oligomerization and subsequent inflammasome activation. Interacts with IRGM; preventing NLRP3 inflammasome assembly and promoting NLRP3 degradation. Interacts (via KFERQ-like motifs) with HSPA8/HSC70; promoting NLRP3 degradation by the chaperone-mediated autophagy pathway. Interacts (via NACHT and LLR domains) with ABHD8; this interaction is enhanced in the presence of NLRP3 inflammasome inducers, such as ATP, nigericin, silica, or alum. Interaction with ABHD8 leads the recruitment of ZDHHC12, hence facilitating NLRP3 palmitoylation and degradation by the chaperone-mediated autophagy pathway (CMA), therefore attenuating NLRP3 inflammasome activation. In terms of processing, phosphorylation at Ser-198 by MAPK8/JNK1 increases inflammasome activation by promoting deubiquitination by BRCC3 and NLRP3 homooligomerization. Phosphorylation at Ser-801 by CSNK1A1 prevents inflammasome activation by preventing NEK7 recruitment. Phosphorylation at Ser-5 in the pyrin domain inhibits homomultimerization of NLRP3 and activation of the NLRP3 inflammasome: dephosphorylation by protein phosphatase 2A (PP2A) promotes assembly of the NLRP3 inflammasome. Phosphorylation at Ser-292 by PKD/PRKD1 promotes NLRP3 inflammasome assembly. Phosphorylation by ERK1/MAPK3 promotes NLRP3 inflammasome assembly. Phosphorylation by BTK (at Tyr-131, Tyr-135 and Tyr-138) in the region that mediates binding to phosphatidylinositol phosphate, promotes relocalization of NLRP3 and assembly of the NLRP3 inflammasome. Phosphorylation at Tyr-856 inhibits NLRP3 inflammasome assembly: dephosphorylation by PTPN22 promotes inflammasome activation. Phosphorylated by LATS1 and LATS2 at Ser-262 following palmitoylation by ZDHHC1, promoting its relocalization to the microtubule organizing center (MTOC), where NLRP3 is activated by NEK7, leading to inflammasome assembly and activation. Post-translationally, ubiquitinated; undergoes both 'Lys-48'- and 'Lys-63'-linked polyubiquitination. Ubiquitination does not lead to degradation, but inhibits inflammasome activation. Deubiquitination is catalyzed by BRCC3 and associated with NLRP3 activation and inflammasome assembly. This process can be induced by the activation of Toll-like receptors (by LPS), through a non-transcriptional pathway dependent on the mitochondrial production of reactive oxygen species, and by ATP. Ubiquitinated by TRIM31 via 'Lys-48'-linked ubiquitination, leading to its degradation by the proteasome. Ubiquitinated at Lys-687 by the SCF(FBXL2) complex, leading to its degradation by the proteasome. Ubiquitinated by TRIM35 via 'lys-48' and 'Lys-63'-linked ubiquitination leading to inhibition of NLRP3 inflammasome activation. Undergoes 'Lys-27'-linked polyubiquitination by MARCHF5, leading to NLRP3-NEK7 complex formation and NLRP3 oligomerization. Palmitoylation by ZDHHC12 promotes NLRP3 degradation by the chaperone-mediated autophagy pathway (CMA) and therefore limits NLRP3 inflammasome activation. Interaction with ZDHHC12, and hence NLRP3 palmitoylation, is greatly enhanced by ABHD8. Following palmitoylation, HSPA8/HSC70 recognizes and binds the KFERQ-like motifs on NLRP3 and promotes NLRP3 recruitment to lysosomes, where it is degraded via the chaperone-mediated autophagy pathway in a LAMP2-dependent process. Palmitoylation at Cys-832 and Cys-833 by ZDHHC5 enhances its binding to NEK7 leading to inflammasome assembly and activation. Palmitoylation at Cys-125 and Cys-953 by ZDHHC1 facilitates phosphorylation at Ser-262 by LATS1 and LATS2, promoting its relocalization to the microtubule organizing center (MTOC), where NLRP3 is activated by NEK7, leading to inflammasome assembly and activation. Depalmitoylated by ABHD17A. In terms of processing, degraded via selective autophagy following interaction with IRGM. IRGM promotes NLRP3 recruitment to autophagosome membranes, promoting its SQSTM1/p62-dependent autophagy-dependent degradation.

It localises to the cytoplasm. It is found in the cytosol. Its subcellular location is the inflammasome. The protein localises to the cytoskeleton. The protein resides in the microtubule organizing center. It localises to the golgi apparatus membrane. It is found in the endoplasmic reticulum. Its subcellular location is the mitochondrion. The protein localises to the secreted. The protein resides in the nucleus. It carries out the reaction ATP + H2O = ADP + phosphate + H(+). Its activity is regulated as follows. Under resting conditions, NLRP3 binds ADP and is autoinhibited. Inactive NLRP3 forms homodecameric double-ring cages that hide pyrin domains within NACHT-LRR rings to avoid premature activation. NLRP3 activation stimuli include extracellular ATP, nigericin, reactive oxygen species, crystals of monosodium urate or cholesterol, amyloid-beta fibers, environmental or industrial particles and nanoparticles, such as asbestos, silica, aluminum salts, cytosolic dsRNA, etc. Almost all stimuli trigger intracellular K(+) efflux. These stimuli lead to membrane perturbations that induce activation of NLRP3. Upon activation, NLRP3 is transported to microtubule organizing center (MTOC), where it is unlocked by NEK7, leading to its relocalization to dispersed trans-Golgi network (dTGN) vesicle membranes and recruitment of PYCARD/ASC for the formation of an active inflammasome complex. NEK7-activated NLRP3 forms a disk-shaped inflammasome. NLRP3 and PYCARD/ASC interact via their respective pyrin domains; interaction initiates speck formation (nucleation) which greatly enhances further addition of soluble PYCARD/ASC molecules to the speck in a prion-like polymerization process. Clustered PYCARD/ASC nucleates the formation of CASP1 filaments through the interaction of their respective CARD domains, acting as a platform for CASP1 polymerization and activation. Active CASP1 then processes IL1B and IL18 precursors, leading to the release of mature cytokines in the extracellular milieu and inflammatory response. NLRP3 inflammasome assembly is inhibited by IRGM, which impedes NLRP3 oligomerization. NLRP3 inflammasome is inhibited by cyclic AMP (cAMP), which directly binds NLRP3; inhibition is relieved by calcium-sensing receptor CASR, which inhibits production of cAMP. Specifically inhibited by sulfonylurea MCC950 (also named CP-456,773, CRID3), a potent and specific small-molecule inhibitor of the NLRP3 inflammasome that acts by preventing ATP hydrolysis. In terms of biological role, sensor component of the NLRP3 inflammasome, which mediates inflammasome activation in response to defects in membrane integrity, leading to secretion of inflammatory cytokines IL1B and IL18 and pyroptosis. In response to pathogens and other damage-associated signals that affect the integrity of membranes, initiates the formation of the inflammasome polymeric complex composed of NLRP3, CASP1 and PYCARD/ASC. Recruitment of pro-caspase-1 (proCASP1) to the NLRP3 inflammasome promotes caspase-1 (CASP1) activation, which subsequently cleaves and activates inflammatory cytokines IL1B and IL18 and gasdermin-D (GSDMD), promoting cytokine secretion and pyroptosis. Activation of NLRP3 inflammasome is also required for HMGB1 secretion; stimulating inflammatory responses. Under resting conditions, ADP-bound NLRP3 is autoinhibited. NLRP3 activation stimuli include extracellular ATP, nigericin, reactive oxygen species, crystals of monosodium urate or cholesterol, amyloid-beta fibers, environmental or industrial particles and nanoparticles, such as asbestos, silica, aluminum salts, cytosolic dsRNA, etc. Almost all stimuli trigger intracellular K(+) efflux. These stimuli lead to membrane perturbation and activation of NLRP3. Upon activation, NLRP3 is transported to microtubule organizing center (MTOC), where it is unlocked by NEK7, leading to its relocalization to dispersed trans-Golgi network (dTGN) vesicle membranes and formation of an active inflammasome complex. Associates with dTGN vesicle membranes by binding to phosphatidylinositol 4-phosphate (PtdIns4P). Shows ATPase activity. Functionally, independently of inflammasome activation, regulates the differentiation of T helper 2 (Th2) cells and has a role in Th2 cell-dependent asthma and tumor growth. During Th2 differentiation, required for optimal IRF4 binding to IL4 promoter and for IRF4-dependent IL4 transcription. Binds to the consensus DNA sequence 5'-GRRGGNRGAG-3'. May also participate in the transcription of IL5, IL13, GATA3, CCR3, CCR4 and MAF. In Bos taurus (Bovine), this protein is NACHT, LRR and PYD domains-containing protein 3 (NLRP3).